Consider the following 253-residue polypeptide: MAGHSKFKNIQHRKGAQDKKRAKVFTKLIREIVTAAKTGSSNNPENNPRLRNALTAARSQNLPKERIDKAINSANDSSNNENYTEIRYEGYAPNGIAIIVEALTDNKNRTAAEVRSSFTKYGGSLGETGSVNYLFNHCGVIQYPINIASNKDILEAVIEAGGHDIISDDTTHTIYTDIENFSKVLEFLTGKYGIPEDSYIGWIPLNTIIIDDKEKAEKLLKLVEVLEESDDVQRVFGNYELSDDVYEIIQGEP.

Residues 1–21 are disordered; that stretch reads MAGHSKFKNIQHRKGAQDKKR.

It belongs to the TACO1 family.

The protein localises to the cytoplasm. The protein is Probable transcriptional regulatory protein RC0681 of Rickettsia conorii (strain ATCC VR-613 / Malish 7).